A 479-amino-acid chain; its full sequence is MLFWHTQPEHYNQHNSGSYLRDVLALPIFKQEEPQLSPENEARLPPLQYVLCAATSPAVKLHEETLTYLNQGQSYEIRLLENRKLGDFQDLNTKYVKSIIRVVFHDRRLQYTEHQQLEGWRWSRPGDRILDIDIPLSVGILDPRASPTQLNAVEFLWDPAKRASAFIQVHCISTEFTPRKHGGEKGVPFRVQIDTFKQNENGEYTEHLHSASCQIKVFKPKGADRKQKTDREKMEKRTAQEKEKYQPSYETTILTECSPWPDVAYQVNSAPSPSYNGSPNSFGLGEGNASPTHPVEALPVGSDHLLPSASIQDAQQWLHRNRFSQFCRLFASFSGADLLKMSRDDLVQICGPADGIRLFNAIKGRNVRPKMTIYVCQELEQNRVPLQQKRDGSGDSNLSVYHAIFLEELTTLELIEKIANLYSISPQHIHRVYRQGPTGIHVVVSNEMVQNFQDESCFVLSTIKAESNDGYHIILKCGL.

The region spanning 43 to 280 (RLPPLQYVLC…PSPSYNGSPN (238 aa)) is the Grh/CP2 DB domain. Disordered stretches follow at residues 219 to 245 (KPKG…KEKY) and 271 to 301 (PSPS…LPVG). Over residues 221 to 245 (KGADRKQKTDREKMEKRTAQEKEKY) the composition is skewed to basic and acidic residues. Residues 261-365 (PDVAYQVNSA…IRLFNAIKGR (105 aa)) are SAM2-like domain. Residues 271–281 (PSPSYNGSPNS) show a composition bias toward polar residues.

The protein belongs to the grh/CP2 family. CP2 subfamily. In terms of assembly, forms homohexamers via its SAM-like domain. Interacts with MTA1; which is indispensable for TFCP2l1-mediated self-renewal-promoting effect and endoderm-inhibiting action. Highly expressed in placental JEG-3 cells and very low levels of expression in non-steroidogenic cells. No expression was seen in adrenal NCI-H295A cells or in adrenal tissue.

The protein resides in the nucleus. In terms of biological role, transcription factor that facilitates establishment and maintenance of pluripotency in embryonic stem cells (ESCs). With KLF2, acts as the major effector of self-renewal that mediates induction of pluripotency downstream of LIF/STAT3 and Wnt/beta-catenin signaling. Required for normal duct development in the salivary gland and kidney. Coordinates the development of the kidney collecting ducts intercalated (IC) and principal (PC) cells, which regulate acid-base and salt-water homeostasis, respectively. Regulates the expression of IC genes including subunits B1 and D2 of the V-ATPase complex, OXGR1, CA12, SLC4A1, AQP6 and IC-specific transcription factor FOXI1. Also regulates the expression of JAG1 and subsequent notch signaling in the collecting duct. JAG1 initiates notch signaling in PCs but inhibits notch signaling in ICs. Acts as a transcriptional suppressor that may suppress UBP1-mediated transcriptional activation. Modulates the placental expression of CYP11A1. This chain is Transcription factor CP2-like protein 1 (TFCP2L1), found in Homo sapiens (Human).